Reading from the N-terminus, the 463-residue chain is Cysteine--tRNA ligase (463 aa).

A Zn(2+)-binding site is contributed by Cys-28. A 'HIGH' region motif is present at residues 30–40 (VTIYDLCHIGH). The Zn(2+) site is built by Cys-209, His-234, and Glu-238. Residues 266–270 (KMSKS) carry the 'KMSKS' region motif. Residue Lys-269 participates in ATP binding.

The protein belongs to the class-I aminoacyl-tRNA synthetase family. As to quaternary structure, monomer. Zn(2+) serves as cofactor.

The protein localises to the cytoplasm. It catalyses the reaction tRNA(Cys) + L-cysteine + ATP = L-cysteinyl-tRNA(Cys) + AMP + diphosphate. The polypeptide is Cysteine--tRNA ligase (Tolumonas auensis (strain DSM 9187 / NBRC 110442 / TA 4)).